The chain runs to 129 residues: NADH-quinone oxidoreductase subunit A (129 aa).

The next 3 membrane-spanning stretches (helical) occupy residues 14–34, 67–87, and 95–115; these read LAIH…VAAW, FLIA…FAWA, and WLGL…LVYL.

It belongs to the complex I subunit 3 family. In terms of assembly, NDH-1 is composed of 14 different subunits. Subunits NuoA, H, J, K, L, M, N constitute the membrane sector of the complex.

It is found in the cell inner membrane. It carries out the reaction a quinone + NADH + 5 H(+)(in) = a quinol + NAD(+) + 4 H(+)(out). NDH-1 shuttles electrons from NADH, via FMN and iron-sulfur (Fe-S) centers, to quinones in the respiratory chain. The immediate electron acceptor for the enzyme in this species is believed to be ubiquinone. Couples the redox reaction to proton translocation (for every two electrons transferred, four hydrogen ions are translocated across the cytoplasmic membrane), and thus conserves the redox energy in a proton gradient. This chain is NADH-quinone oxidoreductase subunit A, found in Rhodopseudomonas palustris (strain ATCC BAA-98 / CGA009).